Consider the following 79-residue polypeptide: DNA gyrase inhibitor YacG (79 aa).

Positions 7, 10, 26, and 30 each coordinate Zn(2+).

Belongs to the DNA gyrase inhibitor YacG family. As to quaternary structure, interacts with GyrB. Zn(2+) serves as cofactor.

Its function is as follows. Inhibits all the catalytic activities of DNA gyrase by preventing its interaction with DNA. Acts by binding directly to the C-terminal domain of GyrB, which probably disrupts DNA binding by the gyrase. The protein is DNA gyrase inhibitor YacG of Shewanella halifaxensis (strain HAW-EB4).